The following is a 918-amino-acid chain: Isoleucine--tRNA ligase (918 aa).

Positions 57–67 (PYANGDIHIGH) match the 'HIGH' region motif. Glutamate 568 contributes to the L-isoleucyl-5'-AMP binding site. The 'KMSKS' region motif lies at 609–613 (KMSKS). Lysine 612 provides a ligand contact to ATP. Positions 894, 897, 909, and 912 each coordinate Zn(2+).

This sequence belongs to the class-I aminoacyl-tRNA synthetase family. IleS type 1 subfamily. In terms of assembly, monomer. It depends on Zn(2+) as a cofactor.

Its subcellular location is the cytoplasm. The catalysed reaction is tRNA(Ile) + L-isoleucine + ATP = L-isoleucyl-tRNA(Ile) + AMP + diphosphate. Catalyzes the attachment of isoleucine to tRNA(Ile). As IleRS can inadvertently accommodate and process structurally similar amino acids such as valine, to avoid such errors it has two additional distinct tRNA(Ile)-dependent editing activities. One activity is designated as 'pretransfer' editing and involves the hydrolysis of activated Val-AMP. The other activity is designated 'posttransfer' editing and involves deacylation of mischarged Val-tRNA(Ile). The polypeptide is Isoleucine--tRNA ligase (Sulfurovum sp. (strain NBC37-1)).